The primary structure comprises 221 residues: Very-long-chain (3R)-3-hydroxyacyl-CoA dehydratase PASTICCINO 2B (221 aa).

Over 1–11 (MTGVGSAVRRL) the chain is Cytoplasmic. Residues 12-32 (YLSVYNWAVFFGWAQVLYYAV) traverse the membrane as a helical segment. Residues 33-51 (TTLLESGHEAVYAAVERPL) are Lumenal-facing. The helical transmembrane segment at 52–70 (QFAQTAAFLEILHGLVGLV) threads the bilayer. Residues 71–76 (RSPVSA) are Cytoplasmic-facing. A helical transmembrane segment spans residues 77-95 (TLPQIGSRLFLTWGILWSF). Residues 96–100 (PETHS) are Lumenal-facing. A helical membrane pass occupies residues 101 to 121 (HILVTSLVISWSITEIIRYSF). Residues 122–141 (FGMKETFGFAPSWLLWLRYS) are Cytoplasmic-facing. A helical transmembrane segment spans residues 142–165 (TFMVLYPTGISSEVGLIYIALPYM). Catalysis depends on residues Tyr-147 and Glu-154. Over 166–184 (KATEKYCLRMPNKWNFSFD) the chain is Lumenal. The helical transmembrane segment at 185-209 (FSYASILSLAVYVPGSPHMFTYMLA) threads the bilayer. The Cytoplasmic portion of the chain corresponds to 210–221 (QRKKALAKAKAA).

This sequence belongs to the very long-chain fatty acids dehydratase HACD family.

The protein resides in the endoplasmic reticulum membrane. The catalysed reaction is a very-long-chain (3R)-3-hydroxyacyl-CoA = a very-long-chain (2E)-enoyl-CoA + H2O. The protein operates within lipid metabolism; fatty acid biosynthesis. Catalyzes the third of the four reactions of the long-chain fatty acids elongation cycle. This endoplasmic reticulum-bound enzymatic process, allows the addition of two carbons to the chain of long- and very long-chain fatty acids/VLCFAs per cycle. This enzyme catalyzes the dehydration of the 3-hydroxyacyl-CoA intermediate into trans-2,3-enoyl-CoA, within each cycle of fatty acid elongation. Thereby, it participates in the production of VLCFAs of different chain lengths that are involved in multiple biological processes as precursors of membrane lipids and lipid mediators. May be an anti-phosphatase that prevents CDKA-1 dephosphorylation and activation. Involved in the hormonal control of cell division and differentiation. Required for proliferation control of meristematic and non-meristematic cells. Negative regulator of the cell cycle. In Oryza sativa subsp. japonica (Rice), this protein is Very-long-chain (3R)-3-hydroxyacyl-CoA dehydratase PASTICCINO 2B (PAS2B).